Reading from the N-terminus, the 676-residue chain is Heat shock cognate HSP70 protein (676 aa).

The tract at residues 613 to 676 (SARREGKDGW…RIEAINANTE (64 aa)) is disordered. The segment covering 630–646 (GSGDDNDGDDNSDEEDE) has biased composition (acidic residues).

It belongs to the heat shock protein 70 family.

In Trypanosoma brucei brucei, this protein is Heat shock cognate HSP70 protein.